The sequence spans 934 residues: Desmocollin 2-like protein (934 aa).

4 consecutive Cadherin domains span residues Arg167–Phe274, Phe274–Phe381, Lys382–Phe494, and Asn495–Ile600. Residues Arg167–Gly716 lie on the Extracellular side of the membrane. 3 N-linked (GlcNAc...) asparagine glycosylation sites follow: Asn197, Asn296, and Asn316. N-linked (GlcNAc...) asparagine glycosylation is found at Asn509, Asn565, and Asn569. A helical membrane pass occupies residues Ile717 to Phe737. At Cys738–Lys934 the chain is on the cytoplasmic side.

In terms of tissue distribution, expressed at low levels in the brain and heart.

The protein localises to the cell junction. It localises to the desmosome. The protein resides in the cell membrane. A component of desmosome cell-cell junctions which are required for positive regulation of cellular adhesion. Involved in the interaction of plaque proteins and intermediate filaments mediating cell-cell adhesion. Involved in the formation and structural organization of desmosome cell-cell junctions during embryonic development. Required for embryogenesis, specifically for progression of epiboly and normal convergence-extension movements during gastrulation. Required for the development of desmosomal-rich midlines in the heart. Plays an important role in ventricular contraction and resulting heart stroke volume. The polypeptide is Desmocollin 2-like protein (Danio rerio (Zebrafish)).